Consider the following 1712-residue polypeptide: Latent-transforming growth factor beta-binding protein 1 (1712 aa).

Positions 1–23 (MAGAWLRWGLLLWAGLLAWSAHG) are cleaved as a signal peptide. The tract at residues 65-118 (TAASSRALAGPPAERTRRTSQPGGAALPGLRSPLPPEPARPGGPSRQLHSKAGA) is disordered. In terms of domain architecture, EGF-like 1 spans 181-213 (TKPSCVPPCQNGGMCLRPQLCVCKPGSKGKACE). 3 disulfide bridges follow: Cys-185-Cys-195, Cys-189-Cys-201, and Cys-203-Cys-212. 2 N-linked (GlcNAc...) asparagine glycosylation sites follow: Asn-339 and Asn-370. In terms of domain architecture, EGF-like 2 spans 391–423 (RVVICHLPCMNGGQCSSRDKCQCPPNFTGKLCQ). Cystine bridges form between Cys-395–Cys-405, Cys-399–Cys-411, Cys-413–Cys-422, Cys-551–Cys-573, Cys-560–Cys-586, and Cys-574–Cys-589. Asn-416 carries N-linked (GlcNAc...) asparagine glycosylation. Residues 549–601 (GRCFQETIGSQCGKALPGLSKQEDCCGTVGTSWGFNKCQKCPKKQSYHGYTQM) enclose the TB 1 domain. The N-linked (GlcNAc...) asparagine glycan is linked to Asn-612. One can recognise an EGF-like 3; calcium-binding domain in the interval 618-658 (DINECQLQGVCPNGECLNTMGSYRCSCKMGFGPDPTFSSCV). Cystine bridges form between Cys-622–Cys-633, Cys-628–Cys-642, Cys-644–Cys-657, Cys-671–Cys-694, Cys-681–Cys-706, Cys-695–Cys-709, and Cys-696–Cys-721. Ser-639 is a glycosylation site (O-linked (Glc) serine). The TB 2 domain occupies 669–721 (GPCYRLVSPGRHCMHPLSVHLTKQICCCSVGKAWGPHCEKCPLPGTAAFKEIC). The interval 753–799 (NTQPVAKSTHPPPLPAKEEPVEALTSSWEHGPRGAEPEVVTAPPEKE) is disordered. Thr-761 and Thr-793 each carry an O-linked (GalNAc...) threonine glycan. The EGF-like 4; calcium-binding domain maps to 865-906 (EINECTVNPDICGAGHCINLPVRYTCICYEGYKFSEQLRKCV). Cystine bridges form between Cys-869/Cys-881, Cys-876/Cys-890, Cys-892/Cys-905, Cys-911/Cys-923, Cys-918/Cys-932, Cys-934/Cys-947, Cys-953/Cys-964, Cys-959/Cys-973, Cys-976/Cys-988, Cys-994/Cys-1005, Cys-1000/Cys-1014, Cys-1017/Cys-1028, Cys-1034/Cys-1045, Cys-1040/Cys-1054, Cys-1056/Cys-1069, Cys-1075/Cys-1086, Cys-1081/Cys-1095, Cys-1097/Cys-1110, Cys-1116/Cys-1127, Cys-1122/Cys-1136, Cys-1138/Cys-1151, Cys-1157/Cys-1169, Cys-1164/Cys-1178, Cys-1180/Cys-1192, Cys-1198/Cys-1210, Cys-1204/Cys-1219, Cys-1221/Cys-1234, Cys-1240/Cys-1252, Cys-1246/Cys-1261, Cys-1263/Cys-1276, Cys-1282/Cys-1294, Cys-1289/Cys-1303, Cys-1305/Cys-1319, Cys-1340/Cys-1363, Cys-1350/Cys-1375, Cys-1364/Cys-1380, and Cys-1365/Cys-1392. In terms of domain architecture, EGF-like 5; calcium-binding spans 907 to 948 (DIDECAQVRHLCSQGRCENTEGSFLCVCPAGFMASEEGTNCI). An O-linked (Glc) serine glycan is attached at Ser-929. The 41-residue stretch at 949–989 (DVDECLRPDMCRDGRCINTAGAFRCEYCDSGYRMSRRGYCE) folds into the EGF-like 6; calcium-binding domain. Position 966 is a (3R)-3-hydroxyasparagine (Asn-966). An EGF-like 7; calcium-binding domain is found at 990–1029 (DIDECLKPSTCPEEQCVNTPGSYQCVPCTEGFRGWNGQCL). Ser-1011 is a glycosylation site (O-linked (Glc) serine). An EGF-like 8; calcium-binding domain is found at 1030–1070 (DVDECLQPKVCTNGSCTNLEGSYMCSCHRGYSPTPDHRHCQ). Asn-1042 is a glycosylation site (N-linked (GlcNAc...) asparagine). Ser-1051 is a glycosylation site (O-linked (Glc) serine). The 41-residue stretch at 1071-1111 (DIDECQQGNLCMNGQCRNTDGSFRCTCGQGYQLSAAKDQCE) folds into the EGF-like 9; calcium-binding domain. An EGF-like 10; calcium-binding domain is found at 1112 to 1152 (DIDECEHHHLCSHGQCRNTEGSFQCVCNQGYRASVLGDHCE). (3R)-3-hydroxyasparagine is present on Asn-1129. O-linked (Glc) serine glycosylation is present at Ser-1133. The region spanning 1153-1193 (DINECLEDSSVCQGGDCINTAGSYDCTCPDGFQLNDNKGCQ) is the EGF-like 11; calcium-binding domain. Residues 1194–1235 (DINECAQPGLCGSHGECLNTQGSFHCVCEQGFSISADGRTCE) form the EGF-like 12; calcium-binding domain. O-linked (Glc) serine glycosylation occurs at Ser-1216. Residues 1236–1277 (DIDECVNNTVCDSHGFCDNTAGSFRCLCYQGFQAPQDGQGCV) form the EGF-like 13; calcium-binding domain. A glycan (N-linked (GlcNAc...) asparagine) is linked at Asn-1242. The region spanning 1278-1320 (DVNECELLSGVCGEAFCENVEGSFLCVCADENQEYSPMTGQCR) is the EGF-like 14; calcium-binding domain. The 8-Cys3 region stretch occupies residues 1335-1402 (EEKKECYYNL…PRGKGLVPAG (68 aa)). The TB 3 domain maps to 1338-1392 (KECYYNLNDASLCDNVLAPNVTKQECCCTSGAGWGDNCEIFPCPVQGTAEFTEMC). Residue Asn-1357 is glycosylated (N-linked (GlcNAc...) asparagine). Ser-1405 bears the Phosphoserine mark. The region spanning 1415 to 1457 (DADECLLFGEEICKNGYCLNTQPGYECYCKQGTYYDPVKLQCF) is the EGF-like 15; calcium-binding domain. 10 cysteine pairs are disulfide-bonded: Cys-1419/Cys-1432, Cys-1427/Cys-1441, Cys-1443/Cys-1456, Cys-1462/Cys-1473, Cys-1468/Cys-1482, Cys-1484/Cys-1497, Cys-1517/Cys-1541, Cys-1527/Cys-1553, Cys-1542/Cys-1556, and Cys-1543/Cys-1568. The region spanning 1458–1498 (DMDECQDPNSCIDGQCVNTEGSYNCFCTHPMVLDASEKRCV) is the EGF-like 16; calcium-binding domain. A glycan (O-linked (Glc) serine) is linked at Ser-1479. The C-terminal domain stretch occupies residues 1498-1712 (VQPTESNEQI…LNLDKESDLE (215 aa)). The 54-residue stretch at 1515-1568 (DLCWEHLSEEYVCSRPLVGKQTTYTECCCLYGEAWGMQCALCPMKDSDDYAQLC) folds into the TB 4 domain. Residues Ser-1588 and Ser-1607 each carry the phosphoserine modification. Positions 1612 to 1652 (QAEECGILNGCENGRCVRVQEGYTCDCFDGYHLDMAKMTCV) constitute an EGF-like 17 domain. 6 disulfide bridges follow: Cys-1616–Cys-1627, Cys-1622–Cys-1636, Cys-1638–Cys-1651, Cys-1657–Cys-1672, Cys-1667–Cys-1681, and Cys-1683–Cys-1696. The 45-residue stretch at 1653-1697 (DVNECSELNNRMSLCKNAKCINTEGSYKCLCLPGYIPSDKPNYCT) folds into the EGF-like 18; calcium-binding domain. O-linked (Glc) serine glycosylation is present at Ser-1678.

The protein belongs to the LTBP family. In terms of assembly, interacts with TGFB1; associates via disulfide bonds with the Latency-associated peptide chain (LAP) regulatory chain of TGFB1, leading to regulate activation of TGF-beta-1. LTBP1 does not bind directly to TGF-beta-1, the active chain of TGFB1. Interacts (via C-terminal domain) with FBN1 (via N-terminal domain). Interacts with FBN2. Interacts with ADAMTSL2. Interacts with EFEMP2. In terms of processing, contains hydroxylated asparagine residues. Two intrachain disulfide bonds from the TB3 domain are rearranged upon TGFB1 binding, and form interchain bonds with TGFB1 propeptide, anchoring it to the extracellular matrix. Post-translationally, O-glycosylated on serine residues by POGLUT2 and POGLUT3.

Its subcellular location is the secreted. It localises to the extracellular space. It is found in the extracellular matrix. In terms of biological role, key regulator of transforming growth factor beta (TGFB1, TGFB2 and TGFB3) that controls TGF-beta activation by maintaining it in a latent state during storage in extracellular space. Associates specifically via disulfide bonds with the Latency-associated peptide (LAP), which is the regulatory chain of TGF-beta, and regulates integrin-dependent activation of TGF-beta. Outcompeted by LRRC32/GARP for binding to LAP regulatory chain of TGF-beta. This chain is Latent-transforming growth factor beta-binding protein 1, found in Mus musculus (Mouse).